We begin with the raw amino-acid sequence, 45 residues long: Photosystem II reaction center protein K (45 aa).

Positions 1-8 are excised as a propeptide; sequence MEAVFLLA. Residues 24–44 traverse the membrane as a helical segment; it reads LPVIPVFFLALAFVWQAAVGF.

The protein belongs to the PsbK family. In terms of assembly, PSII is composed of 1 copy each of membrane proteins PsbA, PsbB, PsbC, PsbD, PsbE, PsbF, PsbH, PsbI, PsbJ, PsbK, PsbL, PsbM, PsbT, PsbX, PsbY, PsbZ, Psb30/Ycf12, peripheral proteins PsbO, CyanoQ (PsbQ), PsbU, PsbV and a large number of cofactors. It forms dimeric complexes.

It is found in the cellular thylakoid membrane. In terms of biological role, one of the components of the core complex of photosystem II (PSII). PSII is a light-driven water:plastoquinone oxidoreductase that uses light energy to abstract electrons from H(2)O, generating O(2) and a proton gradient subsequently used for ATP formation. It consists of a core antenna complex that captures photons, and an electron transfer chain that converts photonic excitation into a charge separation. The sequence is that of Photosystem II reaction center protein K from Crocosphaera subtropica (strain ATCC 51142 / BH68) (Cyanothece sp. (strain ATCC 51142)).